Reading from the N-terminus, the 890-residue chain is DNA mismatch repair protein MutS (890 aa).

607 to 614 lines the ATP pocket; sequence GPNMSGKS.

The protein belongs to the DNA mismatch repair MutS family.

This protein is involved in the repair of mismatches in DNA. It is possible that it carries out the mismatch recognition step. This protein has a weak ATPase activity. The protein is DNA mismatch repair protein MutS of Bacillus thuringiensis subsp. konkukian (strain 97-27).